Consider the following 232-residue polypeptide: Peptidoglycan-recognition protein LB (232 aa).

An N-terminal signal peptide occupies residues 1–15 (MTALGLVLLSMMGYS). An N-acetylmuramoyl-L-alanine amidase domain is found at 53 to 179 (APYVIIHHSY…RQVRDTECPG (127 aa)). Histidine 59 contacts Zn(2+). A disulfide bond links cysteine 67 and cysteine 73. Zn(2+) is bound by residues histidine 169 and cysteine 177. The N-linked (GlcNAc...) asparagine glycan is linked to asparagine 196. The disordered stretch occupies residues 213 to 232 (HPQAAAPQKPHQSPPAAPKV).

It belongs to the N-acetylmuramoyl-L-alanine amidase 2 family. Monomer. It depends on Zn(2+) as a cofactor. As to expression, widely expressed.

Its subcellular location is the secreted. The enzyme catalyses Hydrolyzes the link between N-acetylmuramoyl residues and L-amino acid residues in certain cell-wall glycopeptides.. Its function is as follows. N-acetylmuramyl-L-alanine amidase involved in innate immunity by degrading bacterial peptidoglycans (PGN). Probably plays a scavenger role by digesting biologically active PGN into biologically inactive fragments. Has no direct bacteriolytic activity. This is Peptidoglycan-recognition protein LB (PGRP-LB) from Drosophila melanogaster (Fruit fly).